The sequence spans 263 residues: Inner membrane protein YpjD (263 aa).

The Periplasmic portion of the chain corresponds to 1 to 3; that stretch reads MPV. Residues 4 to 23 form a helical membrane-spanning segment; sequence FALLALVAYSVSLALIVPGL. Topologically, residues 24-34 are cytoplasmic; it reads LQKNGGWRRMA. Residues 35-54 form a helical membrane-spanning segment; the sequence is IISAVIALVCHAIALEARIL. Residues 55–63 are Periplasmic-facing; sequence PDGDSGQNL. A helical transmembrane segment spans residues 64–83; sequence SLLNVGSLVSLMICTVMTIV. Residues 84-89 are Cytoplasmic-facing; it reads ASRNRG. The chain crosses the membrane as a helical span at residues 90–109; the sequence is WLLLPIVYAFALINLALATF. The Periplasmic portion of the chain corresponds to 110 to 123; the sequence is MPNEYITHLEATPG. The chain crosses the membrane as a helical span at residues 124–146; that stretch reads MLVHIGLSLFSYATLIIAALYAL. Residues 147 to 181 lie on the Cytoplasmic side of the membrane; it reads QLAWIDYQLKNKKLAFNQEMPPLMSIERKMFHITQ. A helical transmembrane segment spans residues 182–201; that stretch reads IGVVLLTLTLCTGLFYMHNL. Residues 202 to 210 are Periplasmic-facing; that stretch reads FSMENIDKA. The chain crosses the membrane as a helical span at residues 211-228; it reads VLSIVAWFVYIVLLWGHY. Residues 229-236 are Cytoplasmic-facing; sequence HEGWRGRR. The chain crosses the membrane as a helical span at residues 237–259; that stretch reads VVWFNVAGAVILTLAYFGSRIVQ. The Periplasmic segment spans residues 260-263; sequence QLIS.

Its subcellular location is the cell inner membrane. The polypeptide is Inner membrane protein YpjD (ypjD) (Escherichia coli O157:H7).